Reading from the N-terminus, the 142-residue chain is Probable histone H2AXb (142 aa).

Over residues 1–12 the composition is skewed to gly residues; sequence MSSGAGSGTTKG. The segment at 1 to 28 is disordered; that stretch reads MSSGAGSGTTKGGRGKPKATKSVSRSSK. Ser139 is subject to Phosphoserine; by ATM and ATR. The [ST]-Q motif signature appears at 139–140; it reads SQ.

Belongs to the histone H2A family. As to quaternary structure, the nucleosome is a histone octamer containing two molecules each of H2A, H2B, H3 and H4 assembled in one H3-H4 heterotetramer and two H2A-H2B heterodimers. The octamer wraps approximately 147 bp of DNA. Interacts with numerous proteins required for DNA damage signaling and repair when phosphorylated on Ser-139. Phosphorylated to form H2AXS139ph (gamma-H2AX) in response to DNA double strand breaks (DSBs) generated by exogenous genotoxic agents and by stalled replication forks, and may also occur during meiotic recombination events. Phosphorylation can extend up to several thousand nucleosomes from the actual site of the DSB and may mark the surrounding chromatin for recruitment of proteins required for DNA damage signaling and repair. Widespread phosphorylation may also serve to amplify the damage signal or aid repair of persistent lesions. H2AXS139ph in response to ionizing radiation is mediated by ATM while defects in DNA replication induce H2AXS139ph subsequent to activation of ATR. Dephosphorylation of H2AXS139ph by PP2A is required for DNA DSB repair. Expressed in meristems and dividing cells.

It localises to the nucleus. The protein resides in the chromosome. Variant histone H2A which replaces conventional H2A in a subset of nucleosomes. Nucleosomes wrap and compact DNA into chromatin, limiting DNA accessibility to the cellular machineries which require DNA as a template. Histones thereby play a central role in transcription regulation, DNA repair, DNA replication and chromosomal stability. DNA accessibility is regulated via a complex set of post-translational modifications of histones, also called histone code, and nucleosome remodeling. Required for checkpoint-mediated arrest of cell cycle progression in response to low doses of ionizing radiation and for efficient repair of DNA double strand breaks (DSBs) specifically when modified by C-terminal phosphorylation. This is Probable histone H2AXb from Arabidopsis thaliana (Mouse-ear cress).